Consider the following 207-residue polypeptide: MARSKTSQRWLKEHFDDPYVKMAQRDGYRSRASYKLLEIQEKDRILRPGMTVVDLGAAPGGWSQVTSRVIGDRGRLIASDILEMDSIPDVTFIQGDFTEDAVFARILEAIGEHPVDLVISDMAPNMSGVRAADQPRAMYLCELALDLAGRVLRPGGDFLIKIFQGEGFDQYHKQAREMFDKVQMRKPLSSRDRSREQYLLARGFRGE.

Residues Gly-60, Trp-62, Asp-80, Asp-96, and Asp-121 each contribute to the S-adenosyl-L-methionine site. The active-site Proton acceptor is Lys-161.

Belongs to the class I-like SAM-binding methyltransferase superfamily. RNA methyltransferase RlmE family.

The protein localises to the cytoplasm. The catalysed reaction is uridine(2552) in 23S rRNA + S-adenosyl-L-methionine = 2'-O-methyluridine(2552) in 23S rRNA + S-adenosyl-L-homocysteine + H(+). In terms of biological role, specifically methylates the uridine in position 2552 of 23S rRNA at the 2'-O position of the ribose in the fully assembled 50S ribosomal subunit. This chain is Ribosomal RNA large subunit methyltransferase E, found in Pseudomonas paraeruginosa (strain DSM 24068 / PA7) (Pseudomonas aeruginosa (strain PA7)).